Here is a 363-residue protein sequence, read N- to C-terminus: Carbamoyl phosphate synthase small chain (363 aa).

Residues 1 to 172 (MKAFLVLDNG…TKYIFGTHTG (172 aa)) form a CPSase region. L-glutamine is bound by residues Ser-45, Gly-224, and Gly-226. Positions 176–362 (KLAVYDYGVK…YDLVETTKRG (187 aa)) constitute a Glutamine amidotransferase type-1 domain. Cys-252 serves as the catalytic Nucleophile. Residues Leu-253, Gln-256, Asn-294, Gly-296, and Phe-297 each contribute to the L-glutamine site. Catalysis depends on residues His-335 and Glu-337.

It belongs to the CarA family. In terms of assembly, composed of two chains; the small (or glutamine) chain promotes the hydrolysis of glutamine to ammonia, which is used by the large (or ammonia) chain to synthesize carbamoyl phosphate. Tetramer of heterodimers (alpha,beta)4.

The enzyme catalyses hydrogencarbonate + L-glutamine + 2 ATP + H2O = carbamoyl phosphate + L-glutamate + 2 ADP + phosphate + 2 H(+). It catalyses the reaction L-glutamine + H2O = L-glutamate + NH4(+). The protein operates within amino-acid biosynthesis; L-arginine biosynthesis; carbamoyl phosphate from bicarbonate: step 1/1. Its pathway is pyrimidine metabolism; UMP biosynthesis via de novo pathway; (S)-dihydroorotate from bicarbonate: step 1/3. Functionally, small subunit of the glutamine-dependent carbamoyl phosphate synthetase (CPSase). CPSase catalyzes the formation of carbamoyl phosphate from the ammonia moiety of glutamine, carbonate, and phosphate donated by ATP, constituting the first step of 2 biosynthetic pathways, one leading to arginine and/or urea and the other to pyrimidine nucleotides. The small subunit (glutamine amidotransferase) binds and cleaves glutamine to supply the large subunit with the substrate ammonia. The chain is Carbamoyl phosphate synthase small chain from Leptospira borgpetersenii serovar Hardjo-bovis (strain L550).